The sequence spans 928 residues: Isoleucine--tRNA ligase (928 aa).

Residues 57-67 (PFANGNIHMGH) carry the 'HIGH' region motif. Glutamate 552 is a binding site for L-isoleucyl-5'-AMP. Positions 593 to 597 (KMSKS) match the 'KMSKS' region motif. Lysine 596 lines the ATP pocket. Positions 887, 890, 907, and 910 each coordinate Zn(2+).

Belongs to the class-I aminoacyl-tRNA synthetase family. IleS type 1 subfamily. As to quaternary structure, monomer. Zn(2+) is required as a cofactor.

The protein localises to the cytoplasm. The enzyme catalyses tRNA(Ile) + L-isoleucine + ATP = L-isoleucyl-tRNA(Ile) + AMP + diphosphate. Functionally, catalyzes the attachment of isoleucine to tRNA(Ile). As IleRS can inadvertently accommodate and process structurally similar amino acids such as valine, to avoid such errors it has two additional distinct tRNA(Ile)-dependent editing activities. One activity is designated as 'pretransfer' editing and involves the hydrolysis of activated Val-AMP. The other activity is designated 'posttransfer' editing and involves deacylation of mischarged Val-tRNA(Ile). The chain is Isoleucine--tRNA ligase from Latilactobacillus sakei subsp. sakei (strain 23K) (Lactobacillus sakei subsp. sakei).